We begin with the raw amino-acid sequence, 464 residues long: Sensor histidine kinase Hik34 (464 aa).

A Histidine kinase domain is found at 235–449 (ALTHEVRTPL…ILTIYLKCEQ (215 aa)). At His238 the chain carries Phosphohistidine; by autocatalysis.

In terms of processing, when expressed in E.coli autophosphorylates at 18 to 30 degrees Celsius; less phosphorylation occurs at 36 and none occurs at 42 or 48 degrees Celsius.

The catalysed reaction is ATP + protein L-histidine = ADP + protein N-phospho-L-histidine.. Functionally, member of a two-component system Hik34/Rre1, controlling expression of at least 20 genes in response to hyperosmotic stress (0.5 M sorbitol) or salt (0.5 M NaCl). Represses expression of heat shock genes under normal growth conditions. Required for survival of long-term heat shock exposure. The polypeptide is Sensor histidine kinase Hik34 (Synechocystis sp. (strain ATCC 27184 / PCC 6803 / Kazusa)).